The following is a 55-amino-acid chain: Cop-6 protein (55 aa).

This sequence belongs to the transcriptional regulatory CopG/NikR family.

Functionally, acts in trans as a negative regulatory element in pE194 replication. The chain is Cop-6 protein from Staphylococcus aureus.